The primary structure comprises 351 residues: Phospho-N-acetylmuramoyl-pentapeptide-transferase (351 aa).

10 helical membrane-spanning segments follow: residues 17–37 (MAYA…HIIL), 62–82 (GIPT…LVFW), 85–105 (ILNV…FLGF), 130–150 (IIFS…HVSI), 163–183 (LGVF…NSFN), 190–210 (GLAI…AYIT), 230–250 (LVIF…FNAY), 254–274 (IMMG…TALI), 281–301 (FSIL…QVIV), and 328–348 (QVVI…LSTI).

This sequence belongs to the glycosyltransferase 4 family. MraY subfamily. It depends on Mg(2+) as a cofactor.

Its subcellular location is the cell inner membrane. The enzyme catalyses UDP-N-acetyl-alpha-D-muramoyl-L-alanyl-gamma-D-glutamyl-meso-2,6-diaminopimeloyl-D-alanyl-D-alanine + di-trans,octa-cis-undecaprenyl phosphate = di-trans,octa-cis-undecaprenyl diphospho-N-acetyl-alpha-D-muramoyl-L-alanyl-D-glutamyl-meso-2,6-diaminopimeloyl-D-alanyl-D-alanine + UMP. It functions in the pathway cell wall biogenesis; peptidoglycan biosynthesis. In terms of biological role, catalyzes the initial step of the lipid cycle reactions in the biosynthesis of the cell wall peptidoglycan: transfers peptidoglycan precursor phospho-MurNAc-pentapeptide from UDP-MurNAc-pentapeptide onto the lipid carrier undecaprenyl phosphate, yielding undecaprenyl-pyrophosphoryl-MurNAc-pentapeptide, known as lipid I. The polypeptide is Phospho-N-acetylmuramoyl-pentapeptide-transferase (Borreliella afzelii (strain PKo) (Borrelia afzelii)).